Consider the following 64-residue polypeptide: Disintegrin CV-11-beta (64 aa).

The Disintegrin domain maps to 1-64; sequence NSAHPCCDPV…SDCPRNPWKD (64 aa). 4 cysteine pairs are disulfide-bonded: C6/C29, C20/C26, C25/C50, and C38/C57. The Cell attachment site signature appears at 42–44; sequence RGD.

This sequence belongs to the disintegrin family. Dimeric disintegrin subfamily. As to quaternary structure, heterodimer with subunit alpha; disulfide-linked. In terms of tissue distribution, expressed by the venom gland.

It is found in the secreted. Its function is as follows. Inhibits ADP-induced human platelet aggregation. Antagonist of alpha-IIb/beta-3 (ITGA2B/ITGB3). The protein is Disintegrin CV-11-beta of Cerastes vipera (Sahara sand viper).